A 143-amino-acid chain; its full sequence is Large ribosomal subunit protein uL13 (143 aa).

It belongs to the universal ribosomal protein uL13 family. In terms of assembly, part of the 50S ribosomal subunit.

Its function is as follows. This protein is one of the early assembly proteins of the 50S ribosomal subunit, although it is not seen to bind rRNA by itself. It is important during the early stages of 50S assembly. This Clostridioides difficile (strain 630) (Peptoclostridium difficile) protein is Large ribosomal subunit protein uL13.